A 512-amino-acid chain; its full sequence is Probable ubiquitin carboxyl-terminal hydrolase 3 (512 aa).

Positions Thr-64–Phe-109 are disordered. The USP domain occupies Arg-133 to Arg-511. Cys-142 (nucleophile) is an active-site residue. His-453 (proton acceptor) is an active-site residue.

This sequence belongs to the peptidase C19 family.

The enzyme catalyses Thiol-dependent hydrolysis of ester, thioester, amide, peptide and isopeptide bonds formed by the C-terminal Gly of ubiquitin (a 76-residue protein attached to proteins as an intracellular targeting signal).. The protein is Probable ubiquitin carboxyl-terminal hydrolase 3 (ubp3) of Schizosaccharomyces pombe (strain 972 / ATCC 24843) (Fission yeast).